The sequence spans 737 residues: Phosphoribosylformylglycinamidine synthase subunit PurL (737 aa).

H48 is an active-site residue. ATP-binding residues include Y51 and K90. E92 contributes to the Mg(2+) binding site. Residues S93–H96 and R115 each bind substrate. H94 functions as the Proton acceptor in the catalytic mechanism. D116 serves as a coordination point for Mg(2+). Substrate is bound at residue Q244. D272 contributes to the Mg(2+) binding site. Residue E316–Q318 coordinates substrate. The ATP site is built by D500 and G537. Residue N538 participates in Mg(2+) binding. Residue S540 coordinates substrate.

The protein belongs to the FGAMS family. In terms of assembly, monomer. Part of the FGAM synthase complex composed of 1 PurL, 1 PurQ and 2 PurS subunits.

Its subcellular location is the cytoplasm. The enzyme catalyses N(2)-formyl-N(1)-(5-phospho-beta-D-ribosyl)glycinamide + L-glutamine + ATP + H2O = 2-formamido-N(1)-(5-O-phospho-beta-D-ribosyl)acetamidine + L-glutamate + ADP + phosphate + H(+). It functions in the pathway purine metabolism; IMP biosynthesis via de novo pathway; 5-amino-1-(5-phospho-D-ribosyl)imidazole from N(2)-formyl-N(1)-(5-phospho-D-ribosyl)glycinamide: step 1/2. In terms of biological role, part of the phosphoribosylformylglycinamidine synthase complex involved in the purines biosynthetic pathway. Catalyzes the ATP-dependent conversion of formylglycinamide ribonucleotide (FGAR) and glutamine to yield formylglycinamidine ribonucleotide (FGAM) and glutamate. The FGAM synthase complex is composed of three subunits. PurQ produces an ammonia molecule by converting glutamine to glutamate. PurL transfers the ammonia molecule to FGAR to form FGAM in an ATP-dependent manner. PurS interacts with PurQ and PurL and is thought to assist in the transfer of the ammonia molecule from PurQ to PurL. The chain is Phosphoribosylformylglycinamidine synthase subunit PurL from Sulfurimonas denitrificans (strain ATCC 33889 / DSM 1251) (Thiomicrospira denitrificans (strain ATCC 33889 / DSM 1251)).